We begin with the raw amino-acid sequence, 210 residues long: UPF0173 protein PYRAB01190 (210 aa).

It belongs to the UPF0173 family.

The polypeptide is UPF0173 protein PYRAB01190 (Pyrococcus abyssi (strain GE5 / Orsay)).